Consider the following 267-residue polypeptide: tRNA pseudouridine synthase A (267 aa).

D51 (nucleophile) is an active-site residue. Y109 contacts substrate.

This sequence belongs to the tRNA pseudouridine synthase TruA family. In terms of assembly, homodimer.

The enzyme catalyses uridine(38/39/40) in tRNA = pseudouridine(38/39/40) in tRNA. Functionally, formation of pseudouridine at positions 38, 39 and 40 in the anticodon stem and loop of transfer RNAs. The polypeptide is tRNA pseudouridine synthase A (Staphylococcus saprophyticus subsp. saprophyticus (strain ATCC 15305 / DSM 20229 / NCIMB 8711 / NCTC 7292 / S-41)).